An 823-amino-acid polypeptide reads, in one-letter code: Zygotic DNA replication licensing factor mcm6-A (823 aa).

The segment at 159 to 186 adopts a C4-type zinc-finger fold; sequence CLDCQTLVRDVEQQFKYTQPSICRNPVC. Residues 347–554 form the MCM domain; it reads LYHNLCTSLF…TDYAIARRIV (208 aa). 397–404 contributes to the ATP binding site; it reads GDPSTAKS. The short motif at 529 to 532 is the Arginine finger element; the sequence is SRFD. Residues 663 to 710 are disordered; sequence PDVNLDQDDEHEPEDETQEGTNGDAEVPNGVNGHVNGINGHSQESNAA. A compositionally biased stretch (acidic residues) spans 667–680; the sequence is LDQDDEHEPEDETQ. Positions 691 to 703 are enriched in low complexity; that stretch reads NGVNGHVNGINGH.

This sequence belongs to the MCM family. As to quaternary structure, component of the mcm2-7 complex (RLF-M). The complex forms a toroidal hexameric ring with the proposed subunit order mcm2-mcm6-mcm4-mcm7-mcm3-mcm5 (By simililarity). Begins to associate with zmcm3, mcm4 and mcm7 into mcm complexes at the neurula stage. May replace mmcm6 in the complex that functions during licensing of DNA replication.

Its subcellular location is the nucleus. It catalyses the reaction ATP + H2O = ADP + phosphate + H(+). Acts as a component of the mcm2-7 complex (mcm complex) which is the putative replicative helicase essential for 'once per cell cycle' DNA replication initiation and elongation in eukaryotic cells. The active ATPase sites in the mcm2-7 ring are formed through the interaction surfaces of two neighboring subunits such that a critical structure of a conserved arginine finger motif is provided in trans relative to the ATP-binding site of the Walker A box of the adjacent subunit. The six ATPase active sites, however, are likely to contribute differentially to the complex helicase activity. The existence of maternal and zygotic forms of mcm3 and mcm6 suggests that specific forms of mcm2-7 complexes may be used during different stages of development. May replace mmcm6 in the mcm2-7 complex. This chain is Zygotic DNA replication licensing factor mcm6-A (zmcm6-a), found in Xenopus laevis (African clawed frog).